The sequence spans 1394 residues: MKDIFNFFEKPKDPLSFSAIRISLASPDKIRQWSHGEVKKPETINYRTFKPERDGLFCAKIFGPVKDYECNCGKYKRMKHRGVVCEKCGVEVIQSKVRRERLGHITLATPVAHIWFLKSLPSRIGNLLDITLKDLEKVLYCESYIVIDPKETTFQRGELLSEDRYQKALDEFGDDAFSAGMGGEAVLGLLRGVGPASKEHGEGIPGLANELRAEMKEATSDAKRKKIAKRLKVVEAFVASGNKPEWMMLEVIPVIPPDLRPLVPLDGGRFATSDLNDLYRRVINRNNRLKRLQELNAPDIIIRNEKRMLQEAVDALFDNGRRGKTITGPNKRPLKSLSDMLKGKQGRFRQNLLGKRVDYSGRSVIVVGPELKLHQCGLPKIMALELFKPFIYNKLEEKGYVTTIKSAKKMVEKERPEVWDILDEVIREHPVLLNRAPTLHRLGIQAFEPVLIEGKAIQLHPLVCTAFNADFDGDQMAVHVPLSIEAQMEARVLMMSTNNILSPAHGKPIIVPSQDIVLGIYYMTRERAFARGEGKVFASPEEVRAAYDQGEVDLQAKVWVRMDGKRVETTVGRVLLYDIVPRRLSFDAINKVMDKKQLQGLIDLTYRLCGEKETVLLADRVRSMGYGNATRAGISIALDNMVIPRKKVDLLERATREVDDIQAQYTEGLITIGERYNKVIDIWAQVTEEVAQEMMGEIGTETAVGTGKDGKREERRQPSFNPIYIMADSGARGSAQQIRQLAGMRGLMAKPSGEIIETPITANFREGLNVLQYFISTHGARKGLADTALKTANSGYLTRRLVDVAQDAIITEYDCGAMDGITLGALVEGGEIIEPMGERILGRVALDDILDAFSGNVLVKANEEIDEGRVKLIENSGIDKVKIRSVLTCQARRGICVECYGRDLARGRKVNIGEAVGVIAAQSIGEPGTQLTMRTFHIGGAASRRAEQSTIENRNAGLIKFNNVSVAKKHDGTLIVMNRNGEIIVTDDQGRERERYGVVYGAKLLVREGQKVEANQLLAEWDPYSMPIITEVAGRVKYGDLVDGVTISEQVDEITGLARKAVIASKDPDARPRISIKDEEGKTKKLANSDADARYMLPEGANLVVNDGDEVDAGDVIAKMPRETTKTKDITGGLPRVAELFEARKPKEHAVISEIDGVVAFGKDTKGKRKVVITPEVDGKLRPDLAKEYLIGKGKHISVHTGDRVRAGEALMDGAANPHDILRVLGEKELARWLVDEVQEVYRLQGVKINDKHIETIVRQMLRRVRIVDVGDTEFLADEQVEKFAFEEENERVLKAGGRAAQGEPLLLGITKASLSTESFISASSFQETTKVLTEAAISGKVDYLRGLKENVIMGRLVPAGTGLGAYKHLDIEVETPVDAVEEAEEALAVGAEE.

Positions 70, 72, 85, and 88 each coordinate Zn(2+). Mg(2+) contacts are provided by Asp470, Asp472, and Asp474. Positions 815, 889, 896, and 899 each coordinate Zn(2+).

This sequence belongs to the RNA polymerase beta' chain family. In terms of assembly, the RNAP catalytic core consists of 2 alpha, 1 beta, 1 beta' and 1 omega subunit. When a sigma factor is associated with the core the holoenzyme is formed, which can initiate transcription. Mg(2+) serves as cofactor. Zn(2+) is required as a cofactor.

It catalyses the reaction RNA(n) + a ribonucleoside 5'-triphosphate = RNA(n+1) + diphosphate. In terms of biological role, DNA-dependent RNA polymerase catalyzes the transcription of DNA into RNA using the four ribonucleoside triphosphates as substrates. The protein is DNA-directed RNA polymerase subunit beta' of Anaeromyxobacter dehalogenans (strain 2CP-C).